We begin with the raw amino-acid sequence, 507 residues long: Phosphoprotein (507 aa).

Phosphoserine occurs at positions 86 and 151. Residues 137-160 (DGVEVWGGDEESENSDVDSGEPDP) are compositionally biased toward acidic residues. The disordered stretch occupies residues 137 to 307 (DGVEVWGGDE…QSNIEPEDDY (171 aa)). Composition is skewed to basic and acidic residues over residues 189–199 (EIQKLLEDQSR) and 222–233 (TASEKPIKKGTD). Low complexity-rich tracts occupy residues 236–252 (STSS…GGAT) and 266–278 (NASA…SASN). Positions 279-301 (VSPTQGSKTESGTTTSRISQSNI) are enriched in polar residues. Positions 304–376 (EDDYDDELFS…LSSVMIAIPG (73 aa)) are multimerization. The interval 459 to 507 (ASRSVIRSIIKSSHLGEDRKDYLMSLLNDIQGSKDLAQFHQMLVKILKN) is interaction with the nucleocapsid (N-RNA).

The protein belongs to the morbillivirus P protein family. In terms of assembly, homotetramer. Interacts (via multimerization domain) with polymerase L; this interaction forms the polymerase L-P complex. Interacts (via N-terminus) with N0 (via Ncore); this interaction allows P to chaperon N0 to avoid N polymerization before encapsidation. Interacts (via C-terminus) with N-RNA template; this interaction positions the polymerase on the template for both transcription and replication. Phosphorylation on serines by host CK2 is necessary for the formation of viral factories.

Functionally, essential cofactor of the RNA polymerase L that plays a central role in the transcription and replication by forming the polymerase complex with RNA polymerase L and recruiting L to the genomic N-RNA template for RNA synthesis. Also plays a central role in the encapsidation of nascent RNA chains by forming the encapsidation complex with the nucleocapsid protein N (N-P complex). Acts as a chaperone for newly synthesized free N protein, so-called N0, allowing encapsidation of nascent RNA chains during replication. The nucleoprotein protein N prevents excessive phosphorylation of P, which leads to down-regulation of viral transcription/ replication. Participates, together with N, in the formation of viral factories (viroplasms), which are large inclusions in the host cytoplasm where replication takes place. The polypeptide is Phosphoprotein (P/V) (Bos indicus (Zebu)).